The following is a 464-amino-acid chain: Cysteine--tRNA ligase (464 aa).

Position 30 (C30) interacts with Zn(2+). Residues 32–42 (MTVYDYCHIGH) carry the 'HIGH' region motif. Positions 214, 239, and 243 each coordinate Zn(2+). A 'KMSKS' region motif is present at residues 271-275 (KMSKS). K274 provides a ligand contact to ATP.

This sequence belongs to the class-I aminoacyl-tRNA synthetase family. Monomer. Requires Zn(2+) as cofactor.

It is found in the cytoplasm. The enzyme catalyses tRNA(Cys) + L-cysteine + ATP = L-cysteinyl-tRNA(Cys) + AMP + diphosphate. The polypeptide is Cysteine--tRNA ligase (Janthinobacterium sp. (strain Marseille) (Minibacterium massiliensis)).